The primary structure comprises 630 residues: Plastin-1 (630 aa).

The fimbrin headpiece stretch occupies residues 1–114 (MENNVTTISR…LGGTSSISTE (114 aa)). EF-hand domains follow at residues 11–46 (EELE…ASLP) and 51–86 (KVRE…LKSK). Aspartate 24, aspartate 26, serine 28, tyrosine 30, glutamate 35, aspartate 64, asparagine 66, aspartate 68, lysine 70, and glutamate 75 together coordinate Ca(2+). 2 actin-binding regions span residues 108–375 (TSSI…LFNT) and 376–624 (YPAL…LMGR). Residues 115 to 630 (GTQHSYSEEE…LMGRGLNKIK (516 aa)) are fimbrin core. Calponin-homology (CH) domains follow at residues 122 to 238 (EEEK…KVGL), 266 to 377 (LSPE…NTYP), 396 to 505 (SNEE…RRYT), and 517 to 626 (KVND…GRGL).

In terms of assembly, monomer. In terms of processing, the N-terminus is blocked.

Its subcellular location is the cytoplasm. The protein localises to the cell projection. It is found in the stereocilium. Actin-bundling protein. In the inner ear, it is required for stereocilia formation. Mediates liquid packing of actin filaments that is necessary for stereocilia to grow to their proper dimensions. The chain is Plastin-1 (PLS1) from Gallus gallus (Chicken).